The primary structure comprises 38 residues: Defensin (38 aa).

3 disulfide bridges follow: cysteine 4/cysteine 26, cysteine 11/cysteine 34, and cysteine 15/cysteine 36.

This sequence belongs to the invertebrate defensin family. Type 2 subfamily.

It localises to the secreted. Its function is as follows. Mediates the inducible antibacterial activity in larvae of A.cyanea. The sequence is that of Defensin from Aeshna cyanea (Southern hawker dragonfly).